Here is a 57-residue protein sequence, read N- to C-terminus: Large ribosomal subunit protein bL32 (57 aa).

Positions 1 to 25 (MATPSNKNSKSHKRNRRGHIGLNVP) are disordered. Residues 9 to 19 (SKSHKRNRRGH) show a composition bias toward basic residues.

It belongs to the bacterial ribosomal protein bL32 family.

The polypeptide is Large ribosomal subunit protein bL32 (Leuconostoc mesenteroides subsp. mesenteroides (strain ATCC 8293 / DSM 20343 / BCRC 11652 / CCM 1803 / JCM 6124 / NCDO 523 / NBRC 100496 / NCIMB 8023 / NCTC 12954 / NRRL B-1118 / 37Y)).